The following is a 387-amino-acid chain: Probable aminomethyltransferase, mitochondrial (387 aa).

E219, R248, and Y385 together coordinate substrate.

Belongs to the GcvT family. In terms of assembly, the glycine cleavage system is composed of four proteins: P, T, L and H.

It localises to the mitochondrion. It catalyses the reaction N(6)-[(R)-S(8)-aminomethyldihydrolipoyl]-L-lysyl-[protein] + (6S)-5,6,7,8-tetrahydrofolate = N(6)-[(R)-dihydrolipoyl]-L-lysyl-[protein] + (6R)-5,10-methylene-5,6,7,8-tetrahydrofolate + NH4(+). Its function is as follows. The glycine cleavage system catalyzes the degradation of glycine. This chain is Probable aminomethyltransferase, mitochondrial (gcv1), found in Schizosaccharomyces pombe (strain 972 / ATCC 24843) (Fission yeast).